Reading from the N-terminus, the 472-residue chain is Acyltransferase PapA3 (472 aa).

Belongs to the PapA acyltransferase family.

The enzyme catalyses a long-chain fatty acyl-CoA + alpha,alpha-trehalose = a 2-O-(long-chain fatty acyl)-alpha,alpha-trehalose + CoA. It catalyses the reaction a mycolipenoyl-CoA + a 2-O-(long-chain fatty acyl)-alpha,alpha-trehalose = a 2-O-(long-chain fatty acyl)-3-O-mycolipenoyl-trehalose + CoA. The catalysed reaction is alpha,alpha-trehalose + hexadecanoyl-CoA = 2-O-hexadecanoyl-alpha,alpha-trehalose + CoA. It carries out the reaction 2-O-hexadecanoyl-alpha,alpha-trehalose + hexadecanoyl-CoA = 2-O,3-O-dihexadecanoyl-alpha,alpha-trehalose + CoA. Functionally, involved in the biosynthesis of polyacyltrehalose (PAT), a pentaacylated, trehalose-based glycolipid that could have a role in anchoring the bacterial capsule. Catalyzes the sequential transfer of two palmitoyl groups onto a single glucose residue of trehalose generating the diacylated product 2,3-diacyltrehalose (trehalose dipalmitate). In Mycobacterium tuberculosis (strain CDC 1551 / Oshkosh), this protein is Acyltransferase PapA3 (papA3).